Consider the following 88-residue polypeptide: UPF0297 protein LAR_0520 (88 aa).

It belongs to the UPF0297 family.

This is UPF0297 protein LAR_0520 from Limosilactobacillus reuteri subsp. reuteri (strain JCM 1112) (Lactobacillus reuteri).